A 348-amino-acid polypeptide reads, in one-letter code: D-erythrose-4-phosphate dehydrogenase (348 aa).

NAD(+) contacts are provided by residues 12 to 13 and Arg-81; that span reads RI. Substrate is bound by residues 154–156, Arg-200, 213–214, and Arg-236; these read SCT and TK. Cys-155 (nucleophile) is an active-site residue. Asn-318 lines the NAD(+) pocket.

This sequence belongs to the glyceraldehyde-3-phosphate dehydrogenase family. Epd subfamily. In terms of assembly, homotetramer.

The protein localises to the cytoplasm. The catalysed reaction is D-erythrose 4-phosphate + NAD(+) + H2O = 4-phospho-D-erythronate + NADH + 2 H(+). It participates in cofactor biosynthesis; pyridoxine 5'-phosphate biosynthesis; pyridoxine 5'-phosphate from D-erythrose 4-phosphate: step 1/5. Its function is as follows. Catalyzes the NAD-dependent conversion of D-erythrose 4-phosphate to 4-phosphoerythronate. This chain is D-erythrose-4-phosphate dehydrogenase, found in Salmonella paratyphi B (strain ATCC BAA-1250 / SPB7).